Consider the following 532-residue polypeptide: Flavin-containing monooxygenase 1 (532 aa).

Topologically, residues 1–510 are lumenal; sequence MVKRVAIVGA…TRTIQESPSS (510 aa). FAD is bound by residues 9–13, Glu-32, 40–41, and 61–62; these read GAGVS, LW, and NS. NADP(+) is bound by residues 60-61 and 195-198; these read SN and SGTD. The helical transmembrane segment at 511–531 threads the bilayer; sequence FETLLKLFSFLALLIAVFLIF. A topological domain (cytoplasmic) is located at residue Leu-532.

Belongs to the FMO family. It depends on FAD as a cofactor. As to expression, liver.

The protein resides in the endoplasmic reticulum membrane. It carries out the reaction hypotaurine + NADPH + O2 + H(+) = taurine + NADP(+) + H2O. It catalyses the reaction hypotaurine + NADH + O2 + H(+) = taurine + NAD(+) + H2O. The enzyme catalyses trimethylamine + NADPH + O2 = trimethylamine N-oxide + NADP(+) + H2O. The catalysed reaction is N,N-dimethylaniline + NADPH + O2 + H(+) = N,N-dimethylaniline N-oxide + NADP(+) + H2O. Broad spectrum monooxygenase that catalyzes the oxygenation of a wide variety of nitrogen- and sulfur-containing compounds including xenobiotics. Catalyzes the S-oxygenation of hypotaurine to produce taurine, an organic osmolyte involved in cell volume regulation as well as a variety of cytoprotective and developmental processes. In vitro, catalyzes the N-oxygenation of trimethylamine (TMA) to produce trimethylamine N-oxide (TMAO) and could therefore participate to the detoxification of this compound that is generated by the action of gut microbiota from dietary precursors such as choline, choline containing compounds, betaine or L-carnitine. The chain is Flavin-containing monooxygenase 1 from Mus musculus (Mouse).